A 119-amino-acid chain; its full sequence is Chorion class CA protein ERA.3 (119 aa).

A signal peptide spans 1–21; the sequence is MSYFVVFAICIQACLFHNVYS. The segment at 22 to 55 is left arm; it reads QCLGRVGPGGPPLGPYGGPLGGPGYGPVGYGGCG. Residues 56 to 103 form a central domain region; the sequence is GYGGSGIGNVAVAGELPVVGSSAVMGQVPVIGAVEFAGPACAVGSVSI. The right arm stretch occupies residues 104–119; it reads SGACGPTCGCGGLPYY.

The protein belongs to the chorion protein family.

Its function is as follows. This protein is one of many from the eggshell of the silk moth. The sequence is that of Chorion class CA protein ERA.3 (ERA.3) from Bombyx mori (Silk moth).